Reading from the N-terminus, the 231-residue chain is ADP-ribosylation factor-like protein 6-interacting protein 4 (231 aa).

The span at 1–19 (MAHVSSRKRSRSRSRSRGR) shows a compositional bias: basic residues. Positions 1 to 154 (MAHVSSRKRS…EDNDGPVLTD (154 aa)) are disordered. Basic and acidic residues predominate over residues 20–34 (RGSEKRSKRSSKDSS). Positions 64–89 (TSRSSSSSSSSSSSSSSSSTSSSSSS) are enriched in low complexity. Over residues 92-119 (RKKRGKHKDKKKRKKKKKRKKKMKRKGK) the composition is skewed to basic residues. Residues serine 142 and serine 176 each carry the phosphoserine modification. A Glycyl lysine isopeptide (Lys-Gly) (interchain with G-Cter in SUMO2) cross-link involves residue lysine 193.

This sequence belongs to the ARL6IP4 family. In terms of assembly, interacts with ARL6. Interacts with ZCCHC17. Interacts with SRSF2.

Its subcellular location is the nucleus. The protein resides in the nucleolus. The protein localises to the nucleus speckle. In terms of biological role, involved in modulating alternative pre-mRNA splicing with either 5' distal site activation or preferential use of 3' proximal site. The protein is ADP-ribosylation factor-like protein 6-interacting protein 4 (Arl6ip4) of Rattus norvegicus (Rat).